The sequence spans 279 residues: Large ribosomal subunit protein uL2 (279 aa).

The segment at 223–279 (MAMNPVDHPMGGGEGKSKSGGGRKHPKSPWGQLAKGLKTRNKKKASSKLIVRGRKSK) is disordered. Over residues 232–242 (MGGGEGKSKSG) the composition is skewed to gly residues. Residues 259–279 (LKTRNKKKASSKLIVRGRKSK) are compositionally biased toward basic residues.

Belongs to the universal ribosomal protein uL2 family. Part of the 50S ribosomal subunit. Forms a bridge to the 30S subunit in the 70S ribosome.

One of the primary rRNA binding proteins. Required for association of the 30S and 50S subunits to form the 70S ribosome, for tRNA binding and peptide bond formation. It has been suggested to have peptidyltransferase activity; this is somewhat controversial. Makes several contacts with the 16S rRNA in the 70S ribosome. The protein is Large ribosomal subunit protein uL2 of Prosthecochloris aestuarii (strain DSM 271 / SK 413).